We begin with the raw amino-acid sequence, 435 residues long: Large ribosomal subunit protein mL65 (435 aa).

This sequence belongs to the mitochondrion-specific ribosomal protein mL65 family. Component of the mitochondrial ribosome small subunit (28S) which comprises a 12S rRNA and about 30 distinct proteins.

The protein resides in the mitochondrion. This chain is Large ribosomal subunit protein mL65 (MRPS30), found in Bos taurus (Bovine).